Here is a 304-residue protein sequence, read N- to C-terminus: Small ribosomal subunit protein uS3 (304 aa).

The 70-residue stretch at 17-86 (IDEFFAEELG…DPQVDVQEVD (70 aa)) folds into the KH type-2 domain. Positions 216-304 (LLEGEPEDSE…DEMDEEGDDE (89 aa)) are disordered.

The protein belongs to the universal ribosomal protein uS3 family. Part of the 30S ribosomal subunit.

Its function is as follows. Binds the lower part of the 30S subunit head. This chain is Small ribosomal subunit protein uS3, found in Haloarcula marismortui (strain ATCC 43049 / DSM 3752 / JCM 8966 / VKM B-1809) (Halobacterium marismortui).